A 393-amino-acid chain; its full sequence is uncharacterized protein (393 aa).

C72, C82, C85, and C160 together coordinate [4Fe-4S] cluster. Positions 215, 245, 267, and 313 each coordinate S-adenosyl-L-methionine. The Nucleophile role is filled by C340.

Belongs to the class I-like SAM-binding methyltransferase superfamily. RNA M5U methyltransferase family.

This is an uncharacterized protein from Nitrosomonas europaea (strain ATCC 19718 / CIP 103999 / KCTC 2705 / NBRC 14298).